A 139-amino-acid chain; its full sequence is Endoribonuclease YbeY (139 aa).

3 residues coordinate Zn(2+): H99, H103, and H109.

This sequence belongs to the endoribonuclease YbeY family. Zn(2+) serves as cofactor.

The protein resides in the cytoplasm. Single strand-specific metallo-endoribonuclease involved in late-stage 70S ribosome quality control and in maturation of the 3' terminus of the 16S rRNA. The polypeptide is Endoribonuclease YbeY (Nautilia profundicola (strain ATCC BAA-1463 / DSM 18972 / AmH)).